We begin with the raw amino-acid sequence, 257 residues long: Ribonuclease HII (257 aa).

Positions 72-257 (ERVAGIDEVG…FSPVQKILQA (186 aa)) constitute an RNase H type-2 domain. A divalent metal cation is bound by residues aspartate 78, glutamate 79, and aspartate 170.

It belongs to the RNase HII family. Mn(2+) serves as cofactor. It depends on Mg(2+) as a cofactor.

The protein resides in the cytoplasm. It carries out the reaction Endonucleolytic cleavage to 5'-phosphomonoester.. Functionally, endonuclease that specifically degrades the RNA of RNA-DNA hybrids. The protein is Ribonuclease HII of Levilactobacillus brevis (strain ATCC 367 / BCRC 12310 / CIP 105137 / JCM 1170 / LMG 11437 / NCIMB 947 / NCTC 947) (Lactobacillus brevis).